The sequence spans 63 residues: 2-hydroxymuconate tautomerase (63 aa).

The Proton acceptor; via imino nitrogen role is filled by P2.

This sequence belongs to the 4-oxalocrotonate tautomerase family. As to quaternary structure, homohexamer.

It carries out the reaction (2Z,4E)-2-hydroxyhexa-2,4-dienedioate = (3E)-2-oxohex-3-enedioate. It participates in aromatic compound metabolism; salicylate degradation. Functionally, catalyzes the ketonization of 2-hydroxymuconate stereoselectively to yield 2-oxo-3-hexenedioate. This chain is 2-hydroxymuconate tautomerase (nahJ), found in Pseudomonas fluorescens.